A 114-amino-acid polypeptide reads, in one-letter code: Large ribosomal subunit protein uL22 (114 aa).

The protein belongs to the universal ribosomal protein uL22 family. As to quaternary structure, part of the 50S ribosomal subunit.

Functionally, this protein binds specifically to 23S rRNA; its binding is stimulated by other ribosomal proteins, e.g. L4, L17, and L20. It is important during the early stages of 50S assembly. It makes multiple contacts with different domains of the 23S rRNA in the assembled 50S subunit and ribosome. In terms of biological role, the globular domain of the protein is located near the polypeptide exit tunnel on the outside of the subunit, while an extended beta-hairpin is found that lines the wall of the exit tunnel in the center of the 70S ribosome. This chain is Large ribosomal subunit protein uL22, found in Desulfitobacterium hafniense (strain DSM 10664 / DCB-2).